We begin with the raw amino-acid sequence, 290 residues long: 4-hydroxybenzoate octaprenyltransferase (290 aa).

The next 8 membrane-spanning stretches (helical) occupy residues 23–43 (IGALLLLWPTLWALWVATPGV), 46–66 (LWIMAVFVAGVWLMRAAGCVV), 99–119 (LFVVLVLISFLLVLTLNTMTI), 141–161 (LPQVVLGAAFGWSIPMAFAAV), 163–183 (ESVPLSCWLMFLANILWAVAY), 213–233 (LIIGILQIGVLALMAIIGELN), 234–254 (GLGWGYYWSIVVAGALFVYQQ), and 268–288 (AFMNNNYVGLVLFLGLAMSYW).

The protein belongs to the UbiA prenyltransferase family. Mg(2+) is required as a cofactor.

It is found in the cell inner membrane. The enzyme catalyses all-trans-octaprenyl diphosphate + 4-hydroxybenzoate = 4-hydroxy-3-(all-trans-octaprenyl)benzoate + diphosphate. It participates in cofactor biosynthesis; ubiquinone biosynthesis. Its function is as follows. Catalyzes the prenylation of para-hydroxybenzoate (PHB) with an all-trans polyprenyl group. Mediates the second step in the final reaction sequence of ubiquinone-8 (UQ-8) biosynthesis, which is the condensation of the polyisoprenoid side chain with PHB, generating the first membrane-bound Q intermediate 3-octaprenyl-4-hydroxybenzoate. This Shigella flexneri protein is 4-hydroxybenzoate octaprenyltransferase.